A 297-amino-acid polypeptide reads, in one-letter code: Acetaldehyde dehydrogenase (297 aa).

Position 15-18 (15-18 (SGSI)) interacts with NAD(+). Cysteine 130 (acyl-thioester intermediate) is an active-site residue. NAD(+) contacts are provided by residues 162-170 (SAGIATREN) and asparagine 272.

The protein belongs to the acetaldehyde dehydrogenase family.

It carries out the reaction acetaldehyde + NAD(+) + CoA = acetyl-CoA + NADH + H(+). The chain is Acetaldehyde dehydrogenase (mhpF) from Burkholderia thailandensis (strain ATCC 700388 / DSM 13276 / CCUG 48851 / CIP 106301 / E264).